A 333-amino-acid polypeptide reads, in one-letter code: tRNA N6-adenosine threonylcarbamoyltransferase (333 aa).

Residues His-111 and His-115 each contribute to the Fe cation site. Residues 134-138 (VVSGG), Asp-167, Gly-180, Asp-184, and Asn-273 contribute to the substrate site. Residue Asp-302 coordinates Fe cation.

This sequence belongs to the KAE1 / TsaD family. The cofactor is Fe(2+).

The protein localises to the cytoplasm. The enzyme catalyses L-threonylcarbamoyladenylate + adenosine(37) in tRNA = N(6)-L-threonylcarbamoyladenosine(37) in tRNA + AMP + H(+). Its function is as follows. Required for the formation of a threonylcarbamoyl group on adenosine at position 37 (t(6)A37) in tRNAs that read codons beginning with adenine. Is involved in the transfer of the threonylcarbamoyl moiety of threonylcarbamoyl-AMP (TC-AMP) to the N6 group of A37, together with TsaE and TsaB. TsaD likely plays a direct catalytic role in this reaction. The polypeptide is tRNA N6-adenosine threonylcarbamoyltransferase (Anaeromyxobacter sp. (strain Fw109-5)).